Here is a 1155-residue protein sequence, read N- to C-terminus: uncharacterized protein (1155 aa).

Residues 1–19 form the signal peptide; it reads MKKNIFITSLLILLLLLSS. A lipid anchor (N-palmitoyl cysteine) is attached at Cys20. Cys20 carries S-diacylglycerol cysteine lipidation. The next 4 helical transmembrane spans lie at 289-309, 395-415, 424-444, and 459-479; these read ISVSAILTLYIMFTVLSFLIG, LGFIYIILYLIALYFIFFLIF, ALITIGMIIIMGPIFICFMLF, and ISYALQPIILFAGIAFISMII.

Belongs to the TrbL/VirB6 family.

It localises to the cell membrane. This is an uncharacterized protein from Rickettsia prowazekii (strain Madrid E).